The sequence spans 435 residues: Elongation factor 1-alpha (435 aa).

Positions 5 to 226 (KTHINLVVIG…DTMEPPKRPT (222 aa)) constitute a tr-type G domain. The G1 stretch occupies residues 14 to 21 (GHVDSGKS). Position 14–21 (14–21 (GHVDSGKS)) interacts with GTP. The interval 70–74 (GITID) is G2. The interval 91 to 94 (DAPG) is G3. GTP-binding positions include 91 to 95 (DAPGH) and 151 to 154 (NKMD). The interval 151 to 154 (NKMD) is G4. Positions 190–192 (SGF) are G5.

The protein belongs to the TRAFAC class translation factor GTPase superfamily. Classic translation factor GTPase family. EF-Tu/EF-1A subfamily.

The protein localises to the cytoplasm. In terms of biological role, this protein promotes the GTP-dependent binding of aminoacyl-tRNA to the A-site of ribosomes during protein biosynthesis. This Cryptosporidium parvum protein is Elongation factor 1-alpha.